We begin with the raw amino-acid sequence, 224 residues long: uncharacterized protein (224 aa).

4 helical membrane-spanning segments follow: residues 39-59 (LICL…FYSI), 70-90 (YLSL…ILFA), 103-123 (VFVF…IGAI), and 139-159 (MHIG…FLIT).

The protein localises to the membrane. This is an uncharacterized protein from Dictyostelium discoideum (Social amoeba).